The primary structure comprises 336 residues: Growth hormone-regulated TBC protein 1 (336 aa).

The 191-residue stretch at 68 to 258 (GVPLEHRARV…RIWDCLFNEG (191 aa)) folds into the Rab-GAP TBC domain.

May act as a GTPase-activating protein for Rab family protein(s). This Homo sapiens (Human) protein is Growth hormone-regulated TBC protein 1 (GRTP1).